Here is a 242-residue protein sequence, read N- to C-terminus: Protein MHF1 homolog (242 aa).

Residues 208 to 242 (LKAKEPQSERKRKKGSAKKEDKASSSNAVRITTDL) form a disordered region. Positions 231-242 (SSSNAVRITTDL) are enriched in polar residues.

It belongs to the TAF9 family. CENP-S/MHF1 subfamily.

The protein resides in the nucleus. Functionally, involved in the promotion of spontaneous somatic homologous recombination (HR) events, which is opposite to the function of FANCM in ordered HR. Only FANCM is essential for replicative repair in the absence of the endonuclease MUS81. Acts in the same pathway as FANCM to restrain class II meiotic crossing over (CO), and acts with FANCM during meiosis to repair interstrand cross-links (ICLs). This common pathway between MHF1 and FANCM is in parallel to the pathway that involves the RECQ4A helicase. The sequence is that of Protein MHF1 homolog from Arabidopsis thaliana (Mouse-ear cress).